A 245-amino-acid polypeptide reads, in one-letter code: Carboxymethylenebutenolidase homolog (245 aa).

Residue Ala2 is modified to N-acetylalanine. Residues Cys132, Asp179, and His212 contribute to the active site. Ser223 bears the Phosphoserine mark.

Belongs to the dienelactone hydrolase family.

The protein resides in the cytoplasm. It localises to the cytosol. Its function is as follows. Cysteine hydrolase. The sequence is that of Carboxymethylenebutenolidase homolog (Cmbl) from Mus musculus (Mouse).